The following is a 186-amino-acid chain: ATP synthase subunit delta (186 aa).

This sequence belongs to the ATPase delta chain family. In terms of assembly, F-type ATPases have 2 components, F(1) - the catalytic core - and F(0) - the membrane proton channel. F(1) has five subunits: alpha(3), beta(3), gamma(1), delta(1), epsilon(1). F(0) has three main subunits: a(1), b(2) and c(10-14). The alpha and beta chains form an alternating ring which encloses part of the gamma chain. F(1) is attached to F(0) by a central stalk formed by the gamma and epsilon chains, while a peripheral stalk is formed by the delta and b chains.

The protein resides in the cell inner membrane. F(1)F(0) ATP synthase produces ATP from ADP in the presence of a proton or sodium gradient. F-type ATPases consist of two structural domains, F(1) containing the extramembraneous catalytic core and F(0) containing the membrane proton channel, linked together by a central stalk and a peripheral stalk. During catalysis, ATP synthesis in the catalytic domain of F(1) is coupled via a rotary mechanism of the central stalk subunits to proton translocation. In terms of biological role, this protein is part of the stalk that links CF(0) to CF(1). It either transmits conformational changes from CF(0) to CF(1) or is implicated in proton conduction. The sequence is that of ATP synthase subunit delta from Leptospira borgpetersenii serovar Hardjo-bovis (strain JB197).